A 518-amino-acid chain; its full sequence is Membrane-bound lytic murein transglycosylase F (518 aa).

The N-terminal stretch at 1 to 21 (MKKLKINYLFIGILALLLAVA) is a signal peptide. Residues 22–269 (LWPSIPWFGK…RIEEKYLGHG (248 aa)) are non-LT domain. Residues 270–518 (DDFDYVDTRT…SRKGSEEKQN (249 aa)) are LT domain. Glu314 is a catalytic residue.

The protein in the N-terminal section; belongs to the bacterial solute-binding protein 3 family. In the C-terminal section; belongs to the transglycosylase Slt family.

The protein resides in the cell outer membrane. The catalysed reaction is Exolytic cleavage of the (1-&gt;4)-beta-glycosidic linkage between N-acetylmuramic acid (MurNAc) and N-acetylglucosamine (GlcNAc) residues in peptidoglycan, from either the reducing or the non-reducing ends of the peptidoglycan chains, with concomitant formation of a 1,6-anhydrobond in the MurNAc residue.. Functionally, murein-degrading enzyme that degrades murein glycan strands and insoluble, high-molecular weight murein sacculi, with the concomitant formation of a 1,6-anhydromuramoyl product. Lytic transglycosylases (LTs) play an integral role in the metabolism of the peptidoglycan (PG) sacculus. Their lytic action creates space within the PG sacculus to allow for its expansion as well as for the insertion of various structures such as secretion systems and flagella. This chain is Membrane-bound lytic murein transglycosylase F, found in Escherichia coli (strain SMS-3-5 / SECEC).